The chain runs to 377 residues: Beta-lactamase (377 aa).

The first 19 residues, 1–19 (MFKTTLCALLITASCSTFA), serve as a signal peptide directing secretion. Ser80 functions as the Acyl-ester intermediate in the catalytic mechanism. Positions 80, 136, 166, 168, 334, and 359 each coordinate a beta-lactam.

The protein belongs to the class-C beta-lactamase family. In terms of assembly, monomer.

Its subcellular location is the periplasm. The enzyme catalyses a beta-lactam + H2O = a substituted beta-amino acid. With respect to regulation, inhibited by the beta-lactamase-blocking agents avibactam, enmetazobactam, relebactam, nacubactam, vaborbactam, taniborbactam, zidebactam, and beta-lactam-analog boronic acids, via a covalent binding to Ser-80. Inhibited by non-beta-lactam, benzo(b)thiophene-2-boronic acid (BZBTH2B) and various cyclic boronates. Not inhibited by clavulanic acid. Inhibited by O-aryloxycarbonyl hydroxamates, via cross-linking of the active site Ser-80 to Lys-331. Weakly inhibited by citric acid. Class C beta-lactamase which confers resistance to penicillins and cephalosporins. Has benzylpenicillin- and cephaloridine-hydrolyzing activity. Has weak cefuroxime, cefotaxime, cefoxitin and oxacillin-hydrolyzing activities. The chain is Beta-lactamase from Escherichia coli (strain K12).